A 406-amino-acid polypeptide reads, in one-letter code: Argininosuccinate synthase (406 aa).

Residues Ala-13 to Ser-21 and Ala-40 each bind ATP. Residues Tyr-91 and Ser-96 each contribute to the L-citrulline site. Gly-121 contacts ATP. Thr-123, Asn-127, and Asp-128 together coordinate L-aspartate. An L-citrulline-binding site is contributed by Asn-127. Positions 131, 182, 191, 267, and 279 each coordinate L-citrulline.

It belongs to the argininosuccinate synthase family. Type 1 subfamily. Homotetramer.

Its subcellular location is the cytoplasm. It carries out the reaction L-citrulline + L-aspartate + ATP = 2-(N(omega)-L-arginino)succinate + AMP + diphosphate + H(+). It functions in the pathway amino-acid biosynthesis; L-arginine biosynthesis; L-arginine from L-ornithine and carbamoyl phosphate: step 2/3. The polypeptide is Argininosuccinate synthase (Brucella anthropi (strain ATCC 49188 / DSM 6882 / CCUG 24695 / JCM 21032 / LMG 3331 / NBRC 15819 / NCTC 12168 / Alc 37) (Ochrobactrum anthropi)).